A 370-amino-acid chain; its full sequence is L-selectin (370 aa).

Positions 1 to 28 (MLCPWKCQNAQRGLWNVFKLWVWIMLCC) are cleaved as a signal peptide. Positions 29-38 (DFFAHHGTDC) are excised as a propeptide. Over 39–333 (WTYHYSKRPM…SINEESDYNP (295 aa)) the chain is Extracellular. The C-type lectin domain maps to 55–155 (AFCRENYTDL…ACHKAKTALC (101 aa)). 10 disulfides stabilise this stretch: cysteine 57–cysteine 155, cysteine 128–cysteine 147, cysteine 128–cysteine 160, cysteine 160–cysteine 171, cysteine 165–cysteine 180, cysteine 182–cysteine 191, cysteine 197–cysteine 241, cysteine 227–cysteine 254, cysteine 259–cysteine 303, and cysteine 289–cysteine 316. Residues asparagine 60, asparagine 77, and asparagine 104 are each glycosylated (N-linked (GlcNAc...) asparagine). Ca(2+)-binding residues include glutamate 118, asparagine 120, glutamate 126, asparagine 143, and aspartate 144. The EGF-like domain occupies 156–192 (YTASCKPWSCSGHGQCVEVINNYTCNCDLGYYGPECQ). Asparagine 177 carries N-linked (GlcNAc...) asparagine glycosylation. 2 consecutive Sushi domains span residues 195–256 (TQCV…TCRV) and 257–318 (IQCE…RCQK). Residues asparagine 216, asparagine 226, and asparagine 246 are each glycosylated (N-linked (GlcNAc...) asparagine). 2 N-linked (GlcNAc...) asparagine glycosylation sites follow: asparagine 308 and asparagine 320. A helical transmembrane segment spans residues 334 to 354 (LFIPVAVMVTAFSGLAFIIWL). Topologically, residues 355 to 370 (ARRLKRKSKKVSEKHG) are cytoplasmic.

It belongs to the selectin/LECAM family. As to quaternary structure, interaction with SELPLG/PSGL1 and PODXL2 is required for promoting recruitment and rolling of leukocytes. This interaction is dependent on the sialyl Lewis X glycan modification of SELPLG and PODXL2, and tyrosine sulfation modifications of SELPLG. Sulfation on 'Tyr-51' of SELPLG is important for L-selectin binding. In terms of processing, N-glycosylated. In terms of tissue distribution, highly expressed in lymphocytes from peripheral lymph nodes. Low in lymphocytes isolated from Peyer patches.

The protein resides in the cell membrane. In terms of biological role, calcium-dependent lectin that mediates cell adhesion by binding to glycoproteins on neighboring cells. Mediates the adherence of lymphocytes to endothelial cells of high endothelial venules in peripheral lymph nodes. Promotes initial tethering and rolling of leukocytes in endothelia. This is L-selectin (SELL) from Bos taurus (Bovine).